The sequence spans 102 residues: Small ribosomal subunit protein uS10 (102 aa).

The protein belongs to the universal ribosomal protein uS10 family. In terms of assembly, part of the 30S ribosomal subunit.

Functionally, involved in the binding of tRNA to the ribosomes. The polypeptide is Small ribosomal subunit protein uS10 (Carboxydothermus hydrogenoformans (strain ATCC BAA-161 / DSM 6008 / Z-2901)).